The following is a 237-amino-acid chain: Ribosomal RNA small subunit methyltransferase G (237 aa).

S-adenosyl-L-methionine contacts are provided by residues G78, F83, 129–130 (AE), and R146.

The protein belongs to the methyltransferase superfamily. RNA methyltransferase RsmG family.

The protein localises to the cytoplasm. Functionally, specifically methylates the N7 position of a guanine in 16S rRNA. This chain is Ribosomal RNA small subunit methyltransferase G, found in Mesoplasma florum (strain ATCC 33453 / NBRC 100688 / NCTC 11704 / L1) (Acholeplasma florum).